The following is a 340-amino-acid chain: tRNA N6-adenosine threonylcarbamoyltransferase (340 aa).

Fe cation is bound by residues His111 and His115. Residues 133–137 (VVSGG), Asp166, Gly179, Asp183, and Asn273 each bind substrate. A Fe cation-binding site is contributed by Asp301.

The protein belongs to the KAE1 / TsaD family. It depends on Fe(2+) as a cofactor.

The protein localises to the cytoplasm. The catalysed reaction is L-threonylcarbamoyladenylate + adenosine(37) in tRNA = N(6)-L-threonylcarbamoyladenosine(37) in tRNA + AMP + H(+). Functionally, required for the formation of a threonylcarbamoyl group on adenosine at position 37 (t(6)A37) in tRNAs that read codons beginning with adenine. Is involved in the transfer of the threonylcarbamoyl moiety of threonylcarbamoyl-AMP (TC-AMP) to the N6 group of A37, together with TsaE and TsaB. TsaD likely plays a direct catalytic role in this reaction. The polypeptide is tRNA N6-adenosine threonylcarbamoyltransferase (Pelobacter propionicus (strain DSM 2379 / NBRC 103807 / OttBd1)).